The chain runs to 213 residues: High frequency lysogenization protein HflD homolog (213 aa).

A coiled-coil region spans residues 79–126 (QGLNAELTRYTLSLMVLERKLSSAKGALDTLGNRINGLQRQLEHFDLQ).

This sequence belongs to the HflD family.

It localises to the cytoplasm. Its subcellular location is the cell inner membrane. In Shigella boydii serotype 18 (strain CDC 3083-94 / BS512), this protein is High frequency lysogenization protein HflD homolog.